Reading from the N-terminus, the 312-residue chain is R2-like ligand binding oxidase (312 aa).

Mn(2+) contacts are provided by Glu68, Glu101, and His104. Positions 71-162 form a cross-link, 3-(O4'-tyrosyl)-valine (Val-Tyr); that stretch reads VTQDIQPFMA…AAQVRASATY (92 aa). Glu101 lines the Fe cation pocket. Glu167, Glu202, and His205 together coordinate Fe cation.

It belongs to the ribonucleoside diphosphate reductase small chain family. R2-like ligand binding oxidase subfamily. As to quaternary structure, homodimer. Fe cation is required as a cofactor. Requires Mn(2+) as cofactor.

Probable oxidase that might be involved in lipid metabolism. The chain is R2-like ligand binding oxidase from Mycobacterium sp. (strain KMS).